The sequence spans 312 residues: Aminoacyl tRNA synthase complex-interacting multifunctional protein 1 (312 aa).

The residue at position 1 (Met-1) is an N-acetylmethionine. Ala-2 is modified (N-acetylalanine). The segment at 6 to 46 (AVLKRLEQKGAEADQIIEYLKQQVSLLKEKAILQATLREEK) is required for fibroblast proliferation. An interaction with HSP90B1 region spans residues 54–194 (KLKKEIEELK…APRTVVSGLV (141 aa)). A required for endothelial cell death region spans residues 101–114 (AVTTVSSGTKEQIK). Residues 107–147 (SGTKEQIKGGTGDEKKAKEKIEKKGEKKEKKQQSIAGSADS) form a disordered region. Basic and acidic residues predominate over residues 111–138 (EQIKGGTGDEKKAKEKIEKKGEKKEKKQ). The interval 114 to 192 (KGGTGDEKKA…EIAPRTVVSG (79 aa)) is required for endothelial cell migration. Lys-137 participates in a covalent cross-link: Glycyl lysine isopeptide (Lys-Gly) (interchain with G-Cter in SUMO1). Ser-140 is subject to Phosphoserine. Residues 151–252 (DVSRLDLRIG…NGSVPGDRIT (102 aa)) enclose the tRNA-binding domain. Lys-269 carries the post-translational modification N6-succinyllysine.

As to quaternary structure, homodimer. Part of the multisynthetase complex (MSC), a multisubunit complex that groups tRNA ligases for Arg (RARS1), Asp (DARS1), Gln (QARS1), Ile (IARS1), Leu (LARS1), Lys (KARS1), Met (MARS1) the bifunctional ligase for Glu and Pro (EPRS1) and the auxiliary subunits AIMP1/p43, AIMP2/p38 and EEF1E1/p18. Interacts (via N-terminus) with RARS1 (via N-terminus). Part of a complex composed of RARS1, QARS1 and AIMP1. Interacts (via C-terminus) with SMURF2. Interacts (via N-terminus) with HSP90B1/gp96 (via C-terminus). Interacts with PSMA7. Interacts with TARS3. Post-translationally, cleaved by caspase-7 in response to apoptosis to produce EMAP-II.

Its subcellular location is the nucleus. The protein localises to the cytoplasm. It is found in the cytosol. The protein resides in the secreted. It localises to the endoplasmic reticulum. Its subcellular location is the golgi apparatus. Non-catalytic component of the multisynthase complex. Stimulates the catalytic activity of cytoplasmic arginyl-tRNA synthase. Binds tRNA. Possesses inflammatory cytokine activity. Negatively regulates TGF-beta signaling through stabilization of SMURF2 by binding to SMURF2 and inhibiting its SMAD7-mediated degradation. Involved in glucose homeostasis through induction of glucagon secretion at low glucose levels. Promotes dermal fibroblast proliferation and wound repair. Regulates KDELR1-mediated retention of HSP90B1/gp96 in the endoplasmic reticulum. Plays a role in angiogenesis by inducing endothelial cell migration at low concentrations and endothelian cell apoptosis at high concentrations. Induces maturation of dendritic cells and monocyte cell adhesion. Modulates endothelial cell responses by degrading HIF-1A through interaction with PSMA7. This is Aminoacyl tRNA synthase complex-interacting multifunctional protein 1 (AIMP1) from Homo sapiens (Human).